The chain runs to 299 residues: Tyrosine recombinase XerC (299 aa).

The Core-binding (CB) domain maps to 1–85 (MQNELDAYFE…SVRGLYRYLN (85 aa)). The 180-residue stretch at 106 to 285 (RLPRLLDTDR…DFQHLAKVYD (180 aa)) folds into the Tyr recombinase domain. Active-site residues include R146, K170, H237, R240, and H263. The active-site O-(3'-phospho-DNA)-tyrosine intermediate is the Y272.

This sequence belongs to the 'phage' integrase family. XerC subfamily. Forms a cyclic heterotetrameric complex composed of two molecules of XerC and two molecules of XerD.

It localises to the cytoplasm. In terms of biological role, site-specific tyrosine recombinase, which acts by catalyzing the cutting and rejoining of the recombining DNA molecules. The XerC-XerD complex is essential to convert dimers of the bacterial chromosome into monomers to permit their segregation at cell division. It also contributes to the segregational stability of plasmids. The chain is Tyrosine recombinase XerC from Stutzerimonas stutzeri (strain A1501) (Pseudomonas stutzeri).